The following is a 314-amino-acid chain: Olfactory receptor 5P81 (314 aa).

Residues 1–28 lie on the Extracellular side of the membrane; that stretch reads MAFLEDGNHTVVTEFILLGLTDDPVLRV. An N-linked (GlcNAc...) asparagine glycan is attached at N8. A helical membrane pass occupies residues 29 to 49; it reads ILFIIILCIYLVTVSGNLSTI. Residues 50-57 are Cytoplasmic-facing; that stretch reads LLIRVSSQ. A helical membrane pass occupies residues 58-78; it reads LHHPMYFFLSHLASIDIAISS. Topologically, residues 79–102 are extracellular; that stretch reads SVTPNMVVNFLVERSSISYIGCGI. An intrachain disulfide couples C100 to C192. Residues 103–123 traverse the membrane as a helical segment; the sequence is QLGSAVFFGAIECFLLAVMAY. Residues 124 to 136 are Cytoplasmic-facing; it reads DRFVAICNPLLYS. Residues 137–157 traverse the membrane as a helical segment; sequence TKMSKQVCIQLLVGSYIGGFI. Residues 158–199 are Extracellular-facing; that stretch reads HASFFTLSFVSFLFCGPNRINHFFCDFTPLVELSCSDNSVLI. The chain crosses the membrane as a helical span at residues 200 to 220; the sequence is ILDSFSTGTIIVITVFVIAIS. Over 221–240 the chain is Cytoplasmic; that stretch reads YTCILITILKMHSTEGRHKA. Residues 241–261 form a helical membrane-spanning segment; it reads FSTCTSHLTVVTLLYGTVTFI. Over 262-274 the chain is Extracellular; that stretch reads YVMPKSSYSTDQN. The helical transmembrane segment at 275 to 295 threads the bilayer; sequence KVISVFYMVVIPMLNPIIYSL. The Cytoplasmic segment spans residues 296-314; it reads RNNEIKGALKKQLGEKNIF.

It belongs to the G-protein coupled receptor 1 family.

It is found in the cell membrane. In terms of biological role, potential odorant receptor. In Mus musculus (Mouse), this protein is Olfactory receptor 5P81.